A 226-amino-acid chain; its full sequence is 7-cyano-7-deazaguanine synthase (226 aa).

Phenylalanine 10–alanine 20 provides a ligand contact to ATP. Zn(2+) contacts are provided by cysteine 190, cysteine 205, cysteine 208, and cysteine 211.

Belongs to the QueC family. Zn(2+) serves as cofactor.

It carries out the reaction 7-carboxy-7-deazaguanine + NH4(+) + ATP = 7-cyano-7-deazaguanine + ADP + phosphate + H2O + H(+). The protein operates within purine metabolism; 7-cyano-7-deazaguanine biosynthesis. In terms of biological role, catalyzes the ATP-dependent conversion of 7-carboxy-7-deazaguanine (CDG) to 7-cyano-7-deazaguanine (preQ(0)). In Helicobacter pylori (strain Shi470), this protein is 7-cyano-7-deazaguanine synthase.